A 44-amino-acid chain; its full sequence is Protein Tat (44 aa).

A disordered region spans residues 1 to 44 (APEDSQSHQVSLSKQPASQAGGDPTGPKESKKKVESETETDPVP). Residues 7–18 (SHQVSLSKQPAS) show a composition bias toward polar residues. K14 is covalently cross-linked (Glycyl lysine isopeptide (Lys-Gly) (interchain with G-Cter in ubiquitin)). Positions 21-23 (GGD) match the Cell attachment site motif. Positions 26 to 36 (GPKESKKKVES) are enriched in basic and acidic residues.

This sequence belongs to the lentiviruses Tat family. In terms of assembly, interacts with host CCNT1. Associates with the P-TEFb complex composed at least of Tat, P-TEFb (CDK9 and CCNT1), TAR RNA, RNA Pol II. Recruits the HATs CREBBP, TAF1/TFIID, EP300, PCAF and GCN5L2. Interacts with host KAT5/Tip60; this interaction targets the latter to degradation. Interacts with the host deacetylase SIRT1. Interacts with host capping enzyme RNGTT; this interaction stimulates RNGTT. Binds to host KDR, and to the host integrins ITGAV/ITGB3 and ITGA5/ITGB1. Interacts with host KPNB1/importin beta-1 without previous binding to KPNA1/importin alpha-1. Interacts with EIF2AK2. Interacts with host nucleosome assembly protein NAP1L1; this interaction may be required for the transport of Tat within the nucleus, since the two proteins interact at the nuclear rim. Interacts with host C1QBP/SF2P32; this interaction involves lysine-acetylated Tat. Interacts with the host chemokine receptors CCR2, CCR3 and CXCR4. Interacts with host DPP4/CD26; this interaction may trigger an anti-proliferative effect. Interacts with host LDLR. Interacts with the host extracellular matrix metalloproteinase MMP1. Interacts with host PRMT6; this interaction mediates Tat's methylation. Interacts with, and is ubiquitinated by MDM2/Hdm2. Interacts with host PSMC3 and HTATIP2. Interacts with STAB1; this interaction may overcome SATB1-mediated repression of IL2 and IL2RA (interleukin) in T cells by binding to the same domain than HDAC1. Interacts (when acetylated) with human CDK13, thereby increasing HIV-1 mRNA splicing and promoting the production of the doubly spliced HIV-1 protein Nef. Acetylation by EP300, CREBBP, GCN5L2/GCN5 and PCAF regulates the transactivation activity of Tat. Post-translationally, phosphorylated by EIF2AK2 on serine and threonine residues adjacent to the basic region important for TAR RNA binding and function. Phosphorylation of Tat by EIF2AK2 is dependent on the prior activation of EIF2AK2 by dsRNA. In terms of processing, asymmetrical arginine methylation by host PRMT6 seems to diminish the transactivation capacity of Tat and affects the interaction with host CCNT1. Polyubiquitination by MDM2 does not target Tat to degradation, but activates its transactivation function and fosters interaction with CCNT1 and TAR RNA.

The protein localises to the host nucleus. It is found in the host nucleolus. The protein resides in the host cytoplasm. Its subcellular location is the secreted. Its function is as follows. Transcriptional activator that increases RNA Pol II processivity, thereby increasing the level of full-length viral transcripts. Recognizes a hairpin structure at the 5'-LTR of the nascent viral mRNAs referred to as the transactivation responsive RNA element (TAR) and recruits the cyclin T1-CDK9 complex (P-TEFb complex) that will in turn hyperphosphorylate the RNA polymerase II to allow efficient elongation. The CDK9 component of P-TEFb and other Tat-activated kinases hyperphosphorylate the C-terminus of RNA Pol II that becomes stabilized and much more processive. Other factors such as HTATSF1/Tat-SF1, SUPT5H/SPT5, and HTATIP2 are also important for Tat's function. Besides its effect on RNA Pol II processivity, Tat induces chromatin remodeling of proviral genes by recruiting the histone acetyltransferases (HATs) CREBBP, EP300 and PCAF to the chromatin. This also contributes to the increase in proviral transcription rate, especially when the provirus integrates in transcriptionally silent region of the host genome. To ensure maximal activation of the LTR, Tat mediates nuclear translocation of NF-kappa-B by interacting with host RELA. Through its interaction with host TBP, Tat may also modulate transcription initiation. Tat can reactivate a latently infected cell by penetrating in it and transactivating its LTR promoter. In the cytoplasm, Tat is thought to act as a translational activator of HIV-1 mRNAs. Functionally, extracellular circulating Tat can be endocytosed by surrounding uninfected cells via the binding to several surface receptors such as CD26, CXCR4, heparan sulfate proteoglycans (HSPG) or LDLR. Neurons are rarely infected, but they internalize Tat via their LDLR. Endosomal low pH allows Tat to cross the endosome membrane to enter the cytosol and eventually further translocate into the nucleus, thereby inducing severe cell dysfunctions ranging from cell activation to cell death. Through its interaction with nuclear HATs, Tat is potentially able to control the acetylation-dependent cellular gene expression. Tat seems to inhibit the HAT activity of KAT5/Tip60 and TAF1, and consequently modify the expression of specific cellular genes. Modulates the expression of many cellular genes involved in cell survival, proliferation or in coding for cytokines (such as IL10) or cytokine receptors. May be involved in the derepression of host interleukin IL2 expression. Mediates the activation of cyclin-dependent kinases and dysregulation of microtubule network. Tat plays a role in T-cell and neurons apoptosis. Tat induced neurotoxicity and apoptosis probably contribute to neuroAIDS. Host extracellular matrix metalloproteinase MMP1 cleaves Tat and decreases Tat's mediated neurotoxicity. Circulating Tat also acts as a chemokine-like and/or growth factor-like molecule that binds to specific receptors on the surface of the cells, affecting many cellular pathways. In the vascular system, Tat binds to ITGAV/ITGB3 and ITGA5/ITGB1 integrins dimers at the surface of endothelial cells and competes with bFGF for heparin-binding sites, leading to an excess of soluble bFGF. Binds to KDR/VEGFR-2. All these Tat-mediated effects enhance angiogenesis in Kaposi's sarcoma lesions. This Human immunodeficiency virus type 1 group M subtype B (isolate BRVA) (HIV-1) protein is Protein Tat.